Reading from the N-terminus, the 200-residue chain is Serine/threonine-protein kinase mos (200 aa).

The 199-residue stretch at 2–200 (LCLLQPLGSG…ELLKGERVTA (199 aa)) folds into the Protein kinase domain. Residues 8 to 16 (LGSGGFGSV) and lysine 29 each bind ATP. Aspartate 143 (proton acceptor) is an active-site residue.

It belongs to the protein kinase superfamily. Ser/Thr protein kinase family.

It carries out the reaction L-seryl-[protein] + ATP = O-phospho-L-seryl-[protein] + ADP + H(+). The catalysed reaction is L-threonyl-[protein] + ATP = O-phospho-L-threonyl-[protein] + ADP + H(+). This Ciconia nigra (Black stork) protein is Serine/threonine-protein kinase mos (MOS).